A 127-amino-acid polypeptide reads, in one-letter code: Cytochrome b-c1 complex subunit 7, mitochondrial (127 aa).

This sequence belongs to the UQCRB/QCR7 family. As to quaternary structure, component of the ubiquinol-cytochrome c oxidoreductase (cytochrome b-c1 complex, complex III, CIII), a multisubunit enzyme composed of 10 subunits. The complex is composed of 3 respiratory subunits cytochrome b (COB), cytochrome c1 (CYT1) and Rieske protein (RIP1), 2 core protein subunits COR1 and QCR2, and 5 low-molecular weight protein subunits QCR6, QCR7, QCR8, QCR9 and QCR10. The complex exists as an obligatory dimer and forms supercomplexes (SCs) in the inner mitochondrial membrane with a monomer or a dimer of cytochrome c oxidase (complex IV, CIV), resulting in 2 different assemblies (supercomplexes III(2)IV and III(2)IV(2)).

Its subcellular location is the mitochondrion inner membrane. Component of the ubiquinol-cytochrome c oxidoreductase, a multisubunit transmembrane complex that is part of the mitochondrial electron transport chain which drives oxidative phosphorylation. Plays an important role in the uptake of multiple carbon sources such acetate, lactate, amino acids or GlcNAc present in different host niches. This chain is Cytochrome b-c1 complex subunit 7, mitochondrial, found in Candida albicans (strain SC5314 / ATCC MYA-2876) (Yeast).